The sequence spans 328 residues: Tetraacyldisaccharide 4'-kinase (328 aa).

ATP is bound at residue 55–62; it reads TAGGNGKT.

The protein belongs to the LpxK family.

It carries out the reaction a lipid A disaccharide + ATP = a lipid IVA + ADP + H(+). Its pathway is glycolipid biosynthesis; lipid IV(A) biosynthesis; lipid IV(A) from (3R)-3-hydroxytetradecanoyl-[acyl-carrier-protein] and UDP-N-acetyl-alpha-D-glucosamine: step 6/6. Its function is as follows. Transfers the gamma-phosphate of ATP to the 4'-position of a tetraacyldisaccharide 1-phosphate intermediate (termed DS-1-P) to form tetraacyldisaccharide 1,4'-bis-phosphate (lipid IVA). In Escherichia coli (strain SMS-3-5 / SECEC), this protein is Tetraacyldisaccharide 4'-kinase.